A 71-amino-acid chain; its full sequence is Exodeoxyribonuclease 7 small subunit (71 aa).

Belongs to the XseB family. In terms of assembly, heterooligomer composed of large and small subunits.

The protein resides in the cytoplasm. The catalysed reaction is Exonucleolytic cleavage in either 5'- to 3'- or 3'- to 5'-direction to yield nucleoside 5'-phosphates.. In terms of biological role, bidirectionally degrades single-stranded DNA into large acid-insoluble oligonucleotides, which are then degraded further into small acid-soluble oligonucleotides. In Streptococcus equi subsp. equi (strain 4047), this protein is Exodeoxyribonuclease 7 small subunit.